The following is a 257-amino-acid chain: A-factor type gamma-butyrolactone 1'-reductase (1S-forming) (257 aa).

Catalysis depends on tyrosine 161, which acts as the Proton acceptor.

The protein belongs to the short-chain dehydrogenases/reductases (SDR) family. As to quaternary structure, homodimer.

The catalysed reaction is a (3R,4R)-3-[(1S)-1-hydroxyalkyl]-4-(hydroxymethyl)oxolan-2-one + NADP(+) = a (3R,4R)-3-alkanoyl-4-(hydroxymethyl)oxolan-2-one + NADPH + H(+). In terms of biological role, involved in the biosynthesis of virginiae butanolide (VB), which regulates the production of antibiotic virginiamycin. Catalyzes the reduction of 6-dehydro-VB-A to VB-A, the last catalytic step in VB biosynthesis. In vitro, can use various synthetic A-factor-type analogs. This is A-factor type gamma-butyrolactone 1'-reductase (1S-forming) from Streptomyces virginiae (Streptomyces cinnamonensis).